Consider the following 97-residue polypeptide: Ataxin-7-like protein 3B (97 aa).

Positions 76–97 are disordered; sequence SLPGDPGDGPQTELQRSPPEFQ. Ser-92 carries the post-translational modification Phosphoserine.

It belongs to the SGF11 family. In terms of assembly, interacts strongly with ENY2. Interacts weakly with USP22.

It localises to the cytoplasm. By binding to ENY2, interferes with the nuclear functions of the deubiquitinase (DUB) module of the SAGA complex which consists of ENY2, ATXN7, ATXN7L3 and the histone deubiquitinating component USP22. Affects USP22 DUB activity toward histones indirectly by changing the subcellular distribution of ENY2 and altering ENY2 availability for ATXN7L3 interaction. Regulates H2B monoubiquitination (H2Bub1) levels through cytoplasmic sequestration of ENY2 resulting in loss of nuclear ENY2-ATXN7L3 association which destabilizes ATXN7L3. Affects protein expression levels of ENY2 and ATXN7L3. This is Ataxin-7-like protein 3B (Atxn7l3b) from Mus musculus (Mouse).